A 363-amino-acid polypeptide reads, in one-letter code: Dihydroorotate dehydrogenase (quinone) (363 aa).

Residues 62-66 and T86 each bind FMN; that span reads AGYDK. K66 contacts substrate. 111 to 115 contributes to the substrate binding site; sequence NRLGF. FMN contacts are provided by N140 and N171. Residue N171 participates in substrate binding. The active-site Nucleophile is the S174. Position 176 (N176) interacts with substrate. Positions 216 and 244 each coordinate FMN. 245–246 is a binding site for substrate; sequence NT. FMN-binding positions include G266, G295, and 316–317; that span reads YT.

It belongs to the dihydroorotate dehydrogenase family. Type 2 subfamily. As to quaternary structure, monomer. Requires FMN as cofactor.

It localises to the cell membrane. It catalyses the reaction (S)-dihydroorotate + a quinone = orotate + a quinol. The protein operates within pyrimidine metabolism; UMP biosynthesis via de novo pathway; orotate from (S)-dihydroorotate (quinone route): step 1/1. Its function is as follows. Catalyzes the conversion of dihydroorotate to orotate with quinone as electron acceptor. The sequence is that of Dihydroorotate dehydrogenase (quinone) from Chelativorans sp. (strain BNC1).